Here is a 474-residue protein sequence, read N- to C-terminus: Pleckstrin homology domain-containing family S member 1 (474 aa).

One can recognise a PH domain in the interval 20 to 135; sequence EVHKRDYFIK…WVSFMTPYCQ (116 aa). 3 disordered regions span residues 232 to 251, 272 to 321, and 449 to 474; these read IAGPNDSGDSIESNSPDQGF, STSA…DDQK, and RDLPELERTPKRSPAIKKSQKEAAGE. Polar residues predominate over residues 238-248; that stretch reads SGDSIESNSPD. Residues 449–458 show a composition bias toward basic and acidic residues; that stretch reads RDLPELERTP.

The protein is Pleckstrin homology domain-containing family S member 1 of Mus musculus (Mouse).